Here is a 450-residue protein sequence, read N- to C-terminus: Glutamate--tRNA ligase 2 (450 aa).

Positions 10-20 (PSPTGRIHIGN) match the 'HIGH' region motif. The 'KMSKS' region signature appears at 243 to 247 (GFSKR). Lys246 contributes to the ATP binding site.

The protein belongs to the class-I aminoacyl-tRNA synthetase family. Glutamate--tRNA ligase type 1 subfamily. In terms of assembly, monomer.

Its subcellular location is the cytoplasm. The enzyme catalyses tRNA(Glu) + L-glutamate + ATP = L-glutamyl-tRNA(Glu) + AMP + diphosphate. Catalyzes the attachment of glutamate to tRNA(Glu) in a two-step reaction: glutamate is first activated by ATP to form Glu-AMP and then transferred to the acceptor end of tRNA(Glu). This is Glutamate--tRNA ligase 2 from Beijerinckia indica subsp. indica (strain ATCC 9039 / DSM 1715 / NCIMB 8712).